Here is a 173-residue protein sequence, read N- to C-terminus: NADH-quinone oxidoreductase subunit I 2 (173 aa).

4Fe-4S ferredoxin-type domains are found at residues 41–73 (IVLT…LAKA) and 83–112 (EYFR…LTPD). [4Fe-4S] cluster contacts are provided by Cys-53, Cys-56, Cys-59, Cys-63, Cys-92, Cys-95, Cys-98, and Cys-102. The segment covering 153–163 (GKDKGEAEHEA) has biased composition (basic and acidic residues). The disordered stretch occupies residues 153-173 (GKDKGEAEHEAPPVNLKGLLP).

This sequence belongs to the complex I 23 kDa subunit family. As to quaternary structure, NDH-1 is composed of 14 different subunits. Subunits NuoA, H, J, K, L, M, N constitute the membrane sector of the complex. Requires [4Fe-4S] cluster as cofactor.

Its subcellular location is the cell inner membrane. It catalyses the reaction a quinone + NADH + 5 H(+)(in) = a quinol + NAD(+) + 4 H(+)(out). Its function is as follows. NDH-1 shuttles electrons from NADH, via FMN and iron-sulfur (Fe-S) centers, to quinones in the respiratory chain. The immediate electron acceptor for the enzyme in this species is believed to be ubiquinone. Couples the redox reaction to proton translocation (for every two electrons transferred, four hydrogen ions are translocated across the cytoplasmic membrane), and thus conserves the redox energy in a proton gradient. This Rhodopseudomonas palustris (strain ATCC BAA-98 / CGA009) protein is NADH-quinone oxidoreductase subunit I 2.